Here is a 265-residue protein sequence, read N- to C-terminus: 4-hydroxy-tetrahydrodipicolinate reductase (265 aa).

NAD(+) contacts are provided by residues 7–12 (GASGRM) and aspartate 33. Arginine 34 serves as a coordination point for NADP(+). NAD(+)-binding positions include 96-98 (GTT) and 120-123 (ASNF). Histidine 153 serves as the catalytic Proton donor/acceptor. Histidine 154 serves as a coordination point for (S)-2,3,4,5-tetrahydrodipicolinate. The active-site Proton donor is lysine 157. 163-164 (GT) provides a ligand contact to (S)-2,3,4,5-tetrahydrodipicolinate.

Belongs to the DapB family.

The protein localises to the cytoplasm. It carries out the reaction (S)-2,3,4,5-tetrahydrodipicolinate + NAD(+) + H2O = (2S,4S)-4-hydroxy-2,3,4,5-tetrahydrodipicolinate + NADH + H(+). The enzyme catalyses (S)-2,3,4,5-tetrahydrodipicolinate + NADP(+) + H2O = (2S,4S)-4-hydroxy-2,3,4,5-tetrahydrodipicolinate + NADPH + H(+). Its pathway is amino-acid biosynthesis; L-lysine biosynthesis via DAP pathway; (S)-tetrahydrodipicolinate from L-aspartate: step 4/4. In terms of biological role, catalyzes the conversion of 4-hydroxy-tetrahydrodipicolinate (HTPA) to tetrahydrodipicolinate. This is 4-hydroxy-tetrahydrodipicolinate reductase from Paraburkholderia phymatum (strain DSM 17167 / CIP 108236 / LMG 21445 / STM815) (Burkholderia phymatum).